The following is a 42-amino-acid chain: Large ribosomal subunit protein bL36 (42 aa).

The protein belongs to the bacterial ribosomal protein bL36 family.

This Wolbachia pipientis subsp. Culex pipiens (strain wPip) protein is Large ribosomal subunit protein bL36.